Consider the following 499-residue polypeptide: Cytochrome P450 monooxygenase ausI (499 aa).

The chain crosses the membrane as a helical span at residues 10 to 30 (PLGQPLIAGFVVVSAVLYLLY). Residue C439 coordinates heme. N-linked (GlcNAc...) asparagine glycosylation is present at N483.

Belongs to the cytochrome P450 family. It depends on heme as a cofactor.

Its subcellular location is the membrane. It functions in the pathway secondary metabolite biosynthesis; terpenoid biosynthesis. In terms of biological role, cytochrome P450 monooxygenase; part of the gene cluster B that mediates the biosynthesis of austinol and dehydroaustinol, two fungal meroterpenoids. The first step of the pathway is the synthesis of 3,5-dimethylorsellinic acid by the polyketide synthase ausA. 3,5-dimethylorsellinic acid is then prenylated by the polyprenyl transferase ausN. Further epoxidation by the FAD-dependent monooxygenase ausM and cyclization by the probable terpene cyclase ausL lead to the formation of protoaustinoid A. Protoaustinoid A is then oxidized to spiro-lactone preaustinoid A3 by the combined action of the FAD-binding monooxygenases ausB and ausC, and the dioxygenase ausE. Acid-catalyzed keto-rearrangement and ring contraction of the tetraketide portion of preaustinoid A3 by ausJ lead to the formation of preaustinoid A4. The aldo-keto reductase ausK, with the help of ausH, is involved in the next step by transforming preaustinoid A4 into isoaustinone which is in turn hydroxylated by the P450 monooxygenase ausI to form austinolide. Finally, the cytochrome P450 monooxygenase ausG modifies austinolide to austinol. Austinol can be further modified to dehydroaustinol which forms a diffusible complex with diorcinol that initiates conidiation. Due to genetic rearrangements of the clusters and the subsequent loss of some enzymes, the end products of the Emericella nidulans austinoid biosynthesis clusters are austinol and dehydroaustinol, even if additional enzymes, such as the O-acetyltransferase ausQ and the cytochrome P450 monooxygenase ausR are still functional. This chain is Cytochrome P450 monooxygenase ausI, found in Emericella nidulans (strain FGSC A4 / ATCC 38163 / CBS 112.46 / NRRL 194 / M139) (Aspergillus nidulans).